We begin with the raw amino-acid sequence, 267 residues long: Glutamate racemase (267 aa).

Residues 9–10 (DS) and 41–42 (YS) contribute to the substrate site. Catalysis depends on Cys73, which acts as the Proton donor/acceptor. 74 to 75 (NT) contributes to the substrate binding site. Residue Cys184 is the Proton donor/acceptor of the active site. 185–186 (TH) contributes to the substrate binding site.

The protein belongs to the aspartate/glutamate racemases family.

It carries out the reaction L-glutamate = D-glutamate. Its pathway is cell wall biogenesis; peptidoglycan biosynthesis. Provides the (R)-glutamate required for cell wall biosynthesis. This is Glutamate racemase from Actinobacillus pleuropneumoniae serotype 7 (strain AP76).